The sequence spans 148 residues: Large-conductance mechanosensitive channel (148 aa).

The next 2 helical transmembrane spans lie at 9–29 (AFAV…GAAF) and 79–99 (IQTV…VKAI).

Belongs to the MscL family. In terms of assembly, homopentamer.

It localises to the cell inner membrane. Its function is as follows. Channel that opens in response to stretch forces in the membrane lipid bilayer. May participate in the regulation of osmotic pressure changes within the cell. This Pseudomonas syringae pv. tomato (strain ATCC BAA-871 / DC3000) protein is Large-conductance mechanosensitive channel.